We begin with the raw amino-acid sequence, 330 residues long: Diacylglycerol acyltransferase/mycolyltransferase Ag85B (330 aa).

A signal peptide spans 1–40; that stretch reads MTDLSEKVRAWGRRLLVGAAAAVTLPGLIGLAGGAATANA. Position 82 to 83 (82 to 83) interacts with substrate; it reads LR. Positions 98–108 are fibronectin-binding; it reads FEWYYQSGLSV. A disulfide bond links C127 and C132. Substrate-binding residues include S166 and D194. S166 (nucleophile) is an active-site residue. Residue E270 is part of the active site. Substrate-binding positions include 272–275, K279, and 302–304; these read FVRS and HSW. The active site involves H302.

It belongs to the mycobacterial A85 antigen family.

The protein localises to the secreted. The enzyme catalyses 2 alpha,alpha'-trehalose 6-mycolate = alpha,alpha'-trehalose 6,6'-bismycolate + alpha,alpha-trehalose. It catalyses the reaction an acyl-CoA + a 1,2-diacyl-sn-glycerol = a triacyl-sn-glycerol + CoA. In terms of biological role, the antigen 85 proteins (FbpA, FbpB, FbpC) are responsible for the high affinity of mycobacteria for fibronectin, a large adhesive glycoprotein, which facilitates the attachment of M.tuberculosis to murine alveolar macrophages (AMs). They also help to maintain the integrity of the cell wall by catalyzing the transfer of mycolic acids to cell wall arabinogalactan and through the synthesis of alpha,alpha-trehalose dimycolate (TDM, cord factor). They catalyze the transfer of a mycoloyl residue from one molecule of alpha,alpha-trehalose monomycolate (TMM) to another TMM, leading to the formation of TDM. The chain is Diacylglycerol acyltransferase/mycolyltransferase Ag85B (fbpB) from Mycobacterium avium.